Here is a 917-residue protein sequence, read N- to C-terminus: Alanine--tRNA ligase (917 aa).

Positions 615, 619, 719, and 723 each coordinate Zn(2+).

It belongs to the class-II aminoacyl-tRNA synthetase family. Requires Zn(2+) as cofactor.

The protein resides in the cytoplasm. It carries out the reaction tRNA(Ala) + L-alanine + ATP = L-alanyl-tRNA(Ala) + AMP + diphosphate. Catalyzes the attachment of alanine to tRNA(Ala) in a two-step reaction: alanine is first activated by ATP to form Ala-AMP and then transferred to the acceptor end of tRNA(Ala). Also edits incorrectly charged Ser-tRNA(Ala) and Gly-tRNA(Ala) via its editing domain. The sequence is that of Alanine--tRNA ligase from Thermococcus kodakarensis (strain ATCC BAA-918 / JCM 12380 / KOD1) (Pyrococcus kodakaraensis (strain KOD1)).